Here is a 391-residue protein sequence, read N- to C-terminus: Putative penicillin-binding protein PbpX (391 aa).

Residues 21-40 (GKLLFGLLAVMVCITIWNAL) form a helical membrane-spanning segment. Residues 44-76 (SEENEPSQETAAVSNTDQKKEVKKKTAKKSEEQ) form a disordered region. The segment covering 50–59 (SQETAAVSNT) has biased composition (polar residues).

This sequence belongs to the beta-lactamase family.

It localises to the cell membrane. The sequence is that of Putative penicillin-binding protein PbpX (pbpX) from Bacillus subtilis (strain 168).